The sequence spans 348 residues: Protein-glutamate methylesterase/protein-glutamine glutaminase 2 (348 aa).

The Response regulatory domain occupies 5 to 122 (KVLIIDDSAL…DLGLSQYRDE (118 aa)). Residue Asp56 is modified to 4-aspartylphosphate. The 192-residue stretch at 157 to 348 (SLKTGFLCAI…AANIIKHALK (192 aa)) folds into the CheB-type methylesterase domain. Residues Ser169, His195, and Asp291 contribute to the active site.

It belongs to the CheB family. Post-translationally, phosphorylated by CheA. Phosphorylation of the N-terminal regulatory domain activates the methylesterase activity.

Its subcellular location is the cytoplasm. The enzyme catalyses [protein]-L-glutamate 5-O-methyl ester + H2O = L-glutamyl-[protein] + methanol + H(+). The catalysed reaction is L-glutaminyl-[protein] + H2O = L-glutamyl-[protein] + NH4(+). Involved in chemotaxis. Part of a chemotaxis signal transduction system that modulates chemotaxis in response to various stimuli. Catalyzes the demethylation of specific methylglutamate residues introduced into the chemoreceptors (methyl-accepting chemotaxis proteins or MCP) by CheR. Also mediates the irreversible deamidation of specific glutamine residues to glutamic acid. This chain is Protein-glutamate methylesterase/protein-glutamine glutaminase 2, found in Saccharophagus degradans (strain 2-40 / ATCC 43961 / DSM 17024).